The primary structure comprises 383 residues: Protein delta homolog 1 (383 aa).

An N-terminal signal peptide occupies residues 1–23 (MTATEALLRVLLLLLAFGHSTYG). EGF-like domains lie at 24-55 (AECF…PLCD), 53-86 (LCDQ…ELCD), 88-125 (DVRA…KDCQ), 127-168 (KDGP…NFCE), 170-206 (VANS…KTCS), and 208-245 (PVTN…LTCV). Residues 24 to 303 (AECFPACNPQ…KKTPLLTEGQ (280 aa)) are Extracellular-facing. 12 disulfides stabilise this stretch: Cys-26-Cys-37, Cys-30-Cys-43, Cys-45-Cys-54, Cys-57-Cys-68, Cys-63-Cys-74, Cys-76-Cys-85, Cys-92-Cys-103, Cys-97-Cys-113, Cys-115-Cys-124, Cys-131-Cys-144, Cys-138-Cys-156, and Cys-158-Cys-167. An O-linked (GalNAc...) serine glycan is attached at Ser-94. Asn-100 is a glycosylation site (N-linked (GlcNAc...) asparagine). An O-linked (GalNAc...) threonine glycan is attached at Thr-143. O-linked (GalNAc...) serine; partial glycosylation is present at Ser-163. Asn-165 and Asn-172 each carry an N-linked (GlcNAc...) asparagine; atypical; partial glycan. Disulfide bonds link Cys-174–Cys-185, Cys-179–Cys-194, Cys-196–Cys-205, Cys-212–Cys-223, Cys-217–Cys-233, and Cys-235–Cys-244. Ser-214 carries an O-linked (GalNAc...) serine glycan. An O-linked (GalNAc...) threonine; partial glycan is attached at Thr-222. Ser-251 carries an O-linked (GalNAc...) serine; partial glycan. Thr-256 is a glycosylation site (O-linked (GalNAc...) threonine). An O-linked (GalNAc...) serine; partial glycan is attached at Ser-260. The chain crosses the membrane as a helical span at residues 304–327 (AICFTILGVLTSLVVLGTVGIVFL). The Cytoplasmic segment spans residues 328–383 (NKCETWVSNLRYNHMLRKKKNLLLQYNSGEDLAVNIIFPEKIDMTTFSKEAGDEEI).

In terms of assembly, monomer. Interacts with SH3RF2. Post-translationally, N- and O-glycosylated. O-glycosylated with core 1 or possibly core 8 glycans. In terms of tissue distribution, found within the stromal cells in close contact to the vascular structure of placental villi, yolk sac, fetal liver, adrenal cortex and pancreas and in the beta cells of the islets of Langerhans in the adult pancreas. Found also in some forms of neuroendocrine lung tumor tissue.

The protein localises to the membrane. The protein resides in the cytoplasm. In terms of biological role, may have a role in neuroendocrine differentiation. The chain is Protein delta homolog 1 (DLK1) from Homo sapiens (Human).